Here is a 542-residue protein sequence, read N- to C-terminus: Putative leucine aminopeptidase 1 (542 aa).

Mn(2+)-binding residues include Lys294 and Asp299. Lys323 is an active-site residue. Mn(2+) is bound by residues Asp336, Asp396, and Glu398. Arg400 is an active-site residue.

Belongs to the peptidase M17 family. In terms of assembly, homohexamer (dimer of homotrimers). It depends on Mn(2+) as a cofactor.

The protein resides in the cytoplasm. It catalyses the reaction Release of an N-terminal amino acid, Xaa-|-Yaa-, in which Xaa is preferably Leu, but may be other amino acids including Pro although not Arg or Lys, and Yaa may be Pro. Amino acid amides and methyl esters are also readily hydrolyzed, but rates on arylamides are exceedingly low.. The enzyme catalyses Release of N-terminal proline from a peptide.. Functionally, presumably involved in the processing and regular turnover of intracellular proteins. Catalyzes the removal of unsubstituted N-terminal amino acids from various peptides. This is Putative leucine aminopeptidase 1 from Oryza sativa subsp. japonica (Rice).